The primary structure comprises 317 residues: Protoheme IX farnesyltransferase (317 aa).

The next 9 membrane-spanning stretches (helical) occupy residues 39-58 (VMSLVVFTGLIGMLVAPGSL), 62-84 (LGAIAILCIAVATGASGAINMWY), 100-120 (IPAGRIEPGEALGYGIVLAVG), 123-143 (LVMWLATNVVAAAVLAFAIFF), 160-180 (IVIGGAAGAFPPVIGWAAVTG), 184-204 (LMPVMMFAIVFFWTPPHFWSL), 233-253 (IMAYTVLLSVIAVLPWALGDT), 256-276 (VYGLSAVVLSLGFLVQSWRVL), and 293-313 (ARAAFKYSLIYLAVLFLALAV).

The protein belongs to the UbiA prenyltransferase family. Protoheme IX farnesyltransferase subfamily.

It localises to the cell inner membrane. The enzyme catalyses heme b + (2E,6E)-farnesyl diphosphate + H2O = Fe(II)-heme o + diphosphate. The protein operates within porphyrin-containing compound metabolism; heme O biosynthesis; heme O from protoheme: step 1/1. In terms of biological role, converts heme B (protoheme IX) to heme O by substitution of the vinyl group on carbon 2 of heme B porphyrin ring with a hydroxyethyl farnesyl side group. The chain is Protoheme IX farnesyltransferase from Granulibacter bethesdensis (strain ATCC BAA-1260 / CGDNIH1).